We begin with the raw amino-acid sequence, 994 residues long: Valine--tRNA ligase (994 aa).

A 'HIGH' region motif is present at residues 43–53 (PNVTGTLHMGH). Residues 329 to 345 (QSGMPSGATSDTTNTPS) show a composition bias toward polar residues. The segment at 329 to 355 (QSGMPSGATSDTTNTPSDPEASSAANQ) is disordered. The short motif at 585 to 589 (KMSKS) is the 'KMSKS' region element. Lys588 contacts ATP. The tract at residues 692 to 714 (AHSPAQHQAGQDGQDAPRTPQPR) is disordered. Positions 696-707 (AQHQAGQDGQDA) are enriched in low complexity. The stretch at 928 to 994 (LIDVDAERVR…NGLRERRATL (67 aa)) forms a coiled coil.

The protein belongs to the class-I aminoacyl-tRNA synthetase family. ValS type 1 subfamily. In terms of assembly, monomer.

Its subcellular location is the cytoplasm. It catalyses the reaction tRNA(Val) + L-valine + ATP = L-valyl-tRNA(Val) + AMP + diphosphate. Its function is as follows. Catalyzes the attachment of valine to tRNA(Val). As ValRS can inadvertently accommodate and process structurally similar amino acids such as threonine, to avoid such errors, it has a 'posttransfer' editing activity that hydrolyzes mischarged Thr-tRNA(Val) in a tRNA-dependent manner. This Xylella fastidiosa (strain 9a5c) protein is Valine--tRNA ligase.